Reading from the N-terminus, the 136-residue chain is Histone H3.3C-like (136 aa).

Arginine 3 carries the asymmetric dimethylarginine; by PRMT6; alternate modification. Arginine 3 bears the Citrulline; alternate mark. Position 4 is a phosphothreonine; by HASPIN (threonine 4). An Allysine; alternate modification is found at lysine 5. An N6,N6,N6-trimethyllysine; alternate modification is found at lysine 5. Residue lysine 5 is modified to N6,N6-dimethyllysine; alternate. Lysine 5 is subject to N6-(2-hydroxyisobutyryl)lysine; alternate. Lysine 5 bears the N6-(beta-hydroxybutyryl)lysine; alternate mark. Lysine 5 is modified (N6-acetyllysine; alternate). Lysine 5 is subject to N6-methyllysine; alternate. At threonine 7 the chain carries Phosphothreonine; by PKC. At lysine 10 the chain carries N6,N6,N6-trimethyllysine; alternate. Lysine 10 carries the post-translational modification N6,N6-dimethyllysine; alternate. Lysine 10 carries the N6-(2-hydroxyisobutyryl)lysine; alternate modification. Residue lysine 10 is modified to N6-acetyllysine; alternate. Lysine 10 carries the N6-methyllysine; alternate modification. ADP-ribosylserine; alternate is present on serine 11. Phosphoserine; alternate; by AURKB, AURKC, RPS6KA3, RPS6KA4 and RPS6KA5 is present on serine 11. Threonine 12 is modified (phosphothreonine; by PKC). Lysine 15 is modified (N6-(2-hydroxyisobutyryl)lysine; alternate). N6-(beta-hydroxybutyryl)lysine; alternate is present on lysine 15. N6-acetyllysine; alternate is present on lysine 15. At lysine 15 the chain carries N6-glutaryllysine; alternate. Lysine 15 carries the N6-succinyllysine; alternate modification. At arginine 18 the chain carries Citrulline; alternate. Arginine 18 is modified (asymmetric dimethylarginine; by CARM1; alternate). Lysine 19 and lysine 28 each carry N6-(2-hydroxyisobutyryl)lysine; alternate. Lysine 19 is subject to N6-(beta-hydroxybutyryl)lysine; alternate. Lysine 19 and lysine 28 each carry N6-acetyllysine; alternate. N6-methyllysine; alternate occurs at positions 19 and 28. N6-glutaryllysine; alternate is present on residues lysine 19 and lysine 28. Lysine 19 is subject to N6-butyryllysine; alternate. Lysine 28 carries the post-translational modification N6,N6,N6-trimethyllysine; alternate. Residue lysine 28 is modified to N6,N6-dimethyllysine; alternate. ADP-ribosylserine; alternate is present on serine 29. Phosphoserine; alternate; by AURKB, AURKC and RPS6KA5 is present on serine 29. At serine 32 the chain carries Phosphoserine. Lysine 38 carries the post-translational modification N6-methyllysine. Tyrosine 42 is modified (phosphotyrosine). An N6,N6,N6-trimethyllysine; alternate modification is found at lysine 57. At lysine 57 the chain carries N6-(2-hydroxyisobutyryl)lysine; alternate. Lysine 57 carries the post-translational modification N6-(beta-hydroxybutyryl)lysine; alternate. Lysine 57 is subject to N6-acetyllysine; alternate. Lysine 57 bears the N6-glutaryllysine; alternate mark. Position 57 is an N6-succinyllysine; alternate (lysine 57). Lysine 57 carries the N6-methyllysine; by EHMT2; alternate modification. The residue at position 58 (serine 58) is a Phosphoserine. N6-(2-hydroxyisobutyryl)lysine; alternate occurs at positions 65 and 80. N6-methyllysine; alternate is present on residues lysine 65 and lysine 80. Lysine 80 carries the post-translational modification N6,N6,N6-trimethyllysine; alternate. Residue lysine 80 is modified to N6,N6-dimethyllysine; alternate. An N6-acetyllysine; alternate modification is found at lysine 80. Residue lysine 80 is modified to N6-glutaryllysine; alternate. The residue at position 80 (lysine 80) is an N6-succinyllysine; alternate. Threonine 81 is subject to Phosphothreonine. Serine 87 carries the post-translational modification Phosphoserine.

It belongs to the histone H3 family. The nucleosome is a histone octamer containing two molecules each of H2A, H2B, H3 and H4 assembled in one H3-H4 heterotetramer and two H2A-H2B heterodimers. The octamer wraps approximately 147 bp of DNA. Acetylation is generally linked to gene activation. Acetylation on Lys-19 favors methylation at Arg-18. In terms of processing, citrullination at Arg-18 by PADI4 impairs methylation and represses transcription. Post-translationally, asymmetric dimethylation at Arg-18 (H3R17me2a) by CARM1 is linked to gene activation. Asymmetric dimethylation at Arg-3 (H3R2me2a) by PRMT6 is linked to gene repression and is mutually exclusive with H3 Lys-5 methylation (H3K4me2 and H3K4me3). H3R2me2a is present at the 3' of genes regardless of their transcription state and is enriched on inactive promoters, while it is absent on active promoters. Methylation at Lys-5 (H3K4me) and Lys-80 (H3K79me) are linked to gene activation. Methylation at Lys-5 (H3K4me) facilitates subsequent acetylation of H3 and H4. Methylation at Lys-80 (H3K79me) is associated with DNA double-strand break (DSB) responses and is a specific target for TP53BP1. Methylation at Lys-10 (H3K9me) and Lys-28 (H3K27me) are linked to gene repression. Methylation at Lys-10 (H3K9me) is a specific target for HP1 proteins (CBX1, CBX3 and CBX5) and prevents subsequent phosphorylation at Ser-11 (H3S10ph) and acetylation of H3 and H4. Methylation at Lys-5 (H3K4me) and Lys-80 (H3K79me) require preliminary monoubiquitination of H2B at 'Lys-120'. Methylation at Lys-10 (H3K9me) and Lys-28 (H3K27me) are enriched in inactive X chromosome chromatin. Monomethylation at Lys-57 (H3K56me1) by EHMT2/G9A in G1 phase promotes interaction with PCNA and is required for DNA replication. In terms of processing, phosphorylated at Thr-4 (H3T3ph) by HASPIN during prophase and dephosphorylated during anaphase. Phosphorylation at Ser-11 (H3S10ph) by AURKB is crucial for chromosome condensation and cell-cycle progression during mitosis and meiosis. In addition phosphorylation at Ser-11 (H3S10ph) by RPS6KA4 and RPS6KA5 is important during interphase because it enables the transcription of genes following external stimulation, like mitogens, stress, growth factors or UV irradiation and result in the activation of genes, such as c-fos and c-jun. Phosphorylation at Ser-11 (H3S10ph), which is linked to gene activation, prevents methylation at Lys-10 (H3K9me) but facilitates acetylation of H3 and H4. Phosphorylation at Ser-11 (H3S10ph) by AURKB mediates the dissociation of HP1 proteins (CBX1, CBX3 and CBX5) from heterochromatin. Phosphorylation at Ser-11 (H3S10ph) is also an essential regulatory mechanism for neoplastic cell transformation. Phosphorylated at Ser-29 (H3S28ph) by MAP3K20 isoform 1, RPS6KA5 or AURKB during mitosis or upon ultraviolet B irradiation. Phosphorylation at Thr-7 (H3T6ph) by PRKCB is a specific tag for epigenetic transcriptional activation that prevents demethylation of Lys-5 (H3K4me) by LSD1/KDM1A. At centromeres, specifically phosphorylated at Thr-12 (H3T11ph) from prophase to early anaphase, by DAPK3 and PKN1. Phosphorylation at Thr-12 (H3T11ph) by PKN1 or isoform M2 of PKM (PKM2) is a specific tag for epigenetic transcriptional activation that promotes demethylation of Lys-10 (H3K9me) by KDM4C/JMJD2C. Phosphorylation at Tyr-42 (H3Y41ph) by JAK2 promotes exclusion of CBX5 (HP1 alpha) from chromatin. Post-translationally, lysine deamination at Lys-5 (H3K4all) to form allysine is mediated by LOXL2. Allysine formation by LOXL2 only takes place on H3K4me3 and results in gene repression. Butyrylation of histones marks active promoters and competes with histone acetylation. It is present during late spermatogenesis. In terms of processing, succinylation at Lys-80 (H3K79succ) by KAT2A takes place with a maximum frequency around the transcription start sites of genes. It gives a specific tag for epigenetic transcription activation. Post-translationally, serine ADP-ribosylation constitutes the primary form of ADP-ribosylation of proteins in response to DNA damage. Serine ADP-ribosylation at Ser-11 (H3S10ADPr) is mutually exclusive with phosphorylation at Ser-11 (H3S10ph) and impairs acetylation at Lys-10 (H3K9ac).

The protein resides in the nucleus. Its subcellular location is the chromosome. In terms of biological role, core component of nucleosome. Nucleosomes wrap and compact DNA into chromatin, limiting DNA accessibility to the cellular machineries which require DNA as a template. Histones thereby play a central role in transcription regulation, DNA repair, DNA replication and chromosomal stability. DNA accessibility is regulated via a complex set of post-translational modifications of histones, also called histone code, and nucleosome remodeling. In Bos taurus (Bovine), this protein is Histone H3.3C-like.